Consider the following 329-residue polypeptide: Carrier protein YMC2, mitochondrial (329 aa).

Positions 1–27 (MSEEFPTPQLLDELEDQQKVTTPNEKR) are disordered. A mitochondrion-targeting transit peptide spans 1–33 (MSEEFPTPQLLDELEDQQKVTTPNEKRELSSNR). Solcar repeat units follow at residues 34 to 115 (VLKD…MKRF), 143 to 226 (SQYY…LVAR), and 238 to 325 (PPWK…VMRF). 6 helical membrane-spanning segments follow: residues 38–58 (IFAGTIGGIAQVLVGQPFDTT), 84–104 (VFAFYKGALTPLLGVGICVSV), 140–160 (LPLSQYYVCGLTGGVVNSFLA), 205–225 (TMIRAGHGLGTYFLVYEALVA), 243–263 (CLFGAFSGTMLWLTVYPLDVV), and 297–318 (FFKGFGPTMVRSAPVNGATFLT).

Belongs to the mitochondrial carrier (TC 2.A.29) family.

The protein resides in the mitochondrion inner membrane. This Saccharomyces cerevisiae (strain ATCC 204508 / S288c) (Baker's yeast) protein is Carrier protein YMC2, mitochondrial (YMC2).